Reading from the N-terminus, the 270-residue chain is A-type potassium channel modulatory protein KCNIP2 (270 aa).

Over residues 1–17 (MRGQGRKESLSESRDLD) the composition is skewed to basic and acidic residues. The tract at residues 1 to 34 (MRGQGRKESLSESRDLDGSYDQLTGHPPGPSKKA) is disordered. The residue at position 9 (Ser-9) is a Phosphoserine. Residues Cys-45 and Cys-46 are each lipidated (S-palmitoyl cysteine). An EF-hand 1; degenerate domain is found at 81 to 137 (FELSTVCHRPEGLEQLQEQTKFTRRELQVLYRGFKNECPSGIVNEENFKQIYSQFFP). EF-hand domains lie at 140-175 (DSSN…ILRG), 176-211 (TIDD…IYDM), and 224-259 (APRE…DENI). Ca(2+)-binding residues include Asp-153, Asn-155, Asp-157, Ser-159, Asp-164, Asp-189, Asn-191, Asp-193, Cys-195, Glu-200, Asp-237, Asn-239, Asp-241, and Glu-248. An interaction with KCND2 region spans residues 257–270 (ENIMRSMQLFDNVI).

Belongs to the recoverin family. In terms of assembly, component of heteromultimeric potassium channels. Identified in potassium channel complexes containing KCND1, KCND2, KCND3, KCNIP1, KCNIP2, KCNIP3, KCNIP4, DPP6 and DPP10. The KCND2-KCNIP2 channel complex contains four KCND2 and four KCNIP2 subunits. Interacts with KCND2. Probably part of a complex consisting of KCNIP1, KCNIP2 isoform 3 and KCND2. At least isoform 2 and isoform 3 can self-associate to form homodimers and homotetramers. Isoform 3 interacts with KCNIP1 in a calcium-dependent manner. Interacts with KCND3; each KCNIP2 monomer interacts with two adjacent KCND3 subunits, through both the N-terminal inactivation ball of a KCND3 subunit and a C-terminal helix from the adjacent KCND3 subunit, clamping them together; this interaction modulates the channel gating kinetics. In terms of processing, palmitoylated. Palmitoylation enhances association with the plasma membrane. Expressed in heart, brain and lung. In brain, abundantly expressed in striatum, hippocampus and olfactory bulb, moderately expressed in cerebral cortex and lowly expressed in thalamus and hypothalamus. Isoform 1 is predominant in cerebral cortex, striatum and hippocampus. Isoform 1, isoform 2 and isoform 3 are equally expressed in olfactory bulb. Iisoform 3 is expressed at high levels and isoform 1 at low levels in heart (in PubMed:11263977).

Its subcellular location is the cell membrane. Functionally, regulatory subunit of Kv4/D (Shal)-type voltage-gated rapidly inactivating A-type potassium channels. Modulates channel density, inactivation kinetics and rate of recovery from inactivation in a calcium-dependent and isoform-specific manner. Involved in KCND2 and KCND3 trafficking to the cell surface. Essential for the expression of I(To) currents in the heart. Required for normal protein levels of KCND2 in the heart ventricle. The polypeptide is A-type potassium channel modulatory protein KCNIP2 (Rattus norvegicus (Rat)).